Consider the following 281-residue polypeptide: UPF0162 protein PD_0709 (281 aa).

2 TPR repeats span residues V193 to Q226 and P227 to T260.

Belongs to the UPF0162 family.

The polypeptide is UPF0162 protein PD_0709 (Xylella fastidiosa (strain Temecula1 / ATCC 700964)).